The chain runs to 154 residues: Ribosome maturation factor RimP (154 aa).

The protein belongs to the RimP family.

Its subcellular location is the cytoplasm. Its function is as follows. Required for maturation of 30S ribosomal subunits. This chain is Ribosome maturation factor RimP, found in Prochlorococcus marinus (strain MIT 9313).